A 401-amino-acid polypeptide reads, in one-letter code: TNTPEQDRYLQAEKYIEFYVIVDNRMYRYYNYDKPAIKIRVYEMINAVNTKFRPLKIHIALIGLEIWSNEDKFEVKPAASVTLKSFREWRQTVLLPRKRNDNAQLLTGINLNGTAVGIAYPGSLCTQRSVFVVQDYNRRMSLVASTMTHELGHNLGIHHDEASCICIPGPCIMLKKRTAPAFQFSSCSIRDYQEYLLRDRPQCILNKPLSTDIVSPAICGNYFVEEGEECDCGSPAACQSACCDAATCKFNGAGAECRAAKHDCDLPELCTGQSAECPTDSLQRNGHPCQNNQGYCYNGKCPTLTNQCIALLGPHFTVSPKGCFDLNMRGDDGSFCRMEDGTKIPCAAKDVKCGRLYCTEKNTMSCLIPPNPDGIMAEPGTKCGDGMVCSKGQCVDVQTAY.

The Peptidase M12B domain maps to 14-208; it reads KYIEFYVIVD…DRPQCILNKP (195 aa). Ca(2+) contacts are provided by Glu17 and Asp101. N-linked (GlcNAc...) asparagine glycosylation is present at Asn112. Intrachain disulfides connect Cys125/Cys203, Cys164/Cys187, and Cys166/Cys171. His149 lines the Zn(2+) pocket. The active site involves Glu150. Positions 153 and 159 each coordinate Zn(2+). Cys203, Asn206, Ile218, Asn221, Phe223, Glu225, Glu228, and Asp231 together coordinate Ca(2+). In terms of domain architecture, Disintegrin spans 216–285; that stretch reads PAICGNYFVE…ECPTDSLQRN (70 aa). Disulfide bonds link Cys219/Cys248, Cys230/Cys243, Cys232/Cys238, Cys257/Cys277, Cys264/Cys296, Cys289/Cys301, Cys308/Cys358, Cys323/Cys366, Cys336/Cys346, Cys353/Cys389, and Cys383/Cys394. A D/ECD-tripeptide motif is present at residues 263-265; the sequence is DCD. Asp265, Leu266, Glu268, and Asp280 together coordinate Ca(2+).

This sequence belongs to the venom metalloproteinase (M12B) family. P-III subfamily. P-IIIa sub-subfamily. As to quaternary structure, monomer. Zn(2+) serves as cofactor. In terms of tissue distribution, expressed by the venom gland.

It is found in the secreted. Functionally, snake venom zinc protease that inhibits hemostasis by binding and cleaving the vWF in humans. Also has and inhibitory effect on the collagen-induced platelet aggregation. This Naja kaouthia (Monocled cobra) protein is Hemorrhagic metalloproteinase-disintegrin-like kaouthiagin.